The sequence spans 529 residues: Beta-hexosaminidase subunit alpha (529 aa).

The first 22 residues, 1–22, serve as a signal peptide directing secretion; the sequence is MASSRLWFSLLLAAALAGRATA. A propeptide spanning residues 23–88 is cleaved from the precursor; the sequence is LWPWPQNIQT…PRPYLTGKRH (66 aa). C58 and C104 are disulfide-bonded. 3 N-linked (GlcNAc...) asparagine glycosylation sites follow: N115, N157, and N295. The cysteines at positions 277 and 328 are disulfide-linked. Residue E323 is the Proton donor of the active site. Residues 423–424 form a critical for hydrolysis GM2 gangliosides region; the sequence is NR. The cysteines at positions 505 and 522 are disulfide-linked.

The protein belongs to the glycosyl hydrolase 20 family. There are 3 beta-hexosaminidase isozymes: isozyme A (hexosaminidase A) is a heterodimer composed of one subunit alpha and one subunit beta (chain A and B); isozyme B (hexosaminidase B) is a homodimer of two beta subunits (two chains A and B); isozyme S (hexosaminidase S) is a homodimer of two alpha subunits. The composition of the dimer (isozyme A versus isozyme S) has a significant effect on the substrate specificity of the alpha subunit active site.

The protein resides in the lysosome. It catalyses the reaction Hydrolysis of terminal non-reducing N-acetyl-D-hexosamine residues in N-acetyl-beta-D-hexosaminides.. The enzyme catalyses N-acetyl-beta-D-galactosaminyl-(1-&gt;4)-beta-D-3-sulfogalactosyl-(1-&gt;4)-beta-D-glucosyl-(1&lt;-&gt;1')-ceramide + H2O = a beta-D-3-sulfogalactosyl-(1-&gt;4)-beta-D-glucosyl-(1&lt;-&gt;1')-ceramide + N-acetyl-beta-D-galactosamine. It carries out the reaction a ganglioside GM2 (d18:1(4E)) + H2O = a ganglioside GM3 (d18:1(4E)) + N-acetyl-beta-D-galactosamine. The catalysed reaction is a ganglioside GM2 + H2O = a ganglioside GM3 + N-acetyl-beta-D-galactosamine. It catalyses the reaction beta-D-GalNAc-(1-&gt;4)-alpha-L-IdoA-(1-&gt;3)-beta-D-GalNAc-4-sulfate-(1-&gt;4)-alpha-L-IdoA-(1-&gt;3)-D-GalNAc-4-sulfate + H2O = alpha-L-IdoA-(1-&gt;3)-beta-D-GalNAc-4-sulfate-(1-&gt;4)-alpha-L-IdoA-(1-&gt;3)-D-GalNAc-4-sulfate + N-acetyl-D-galactosamine. The enzyme catalyses N-acetyl-beta-D-6-sulfogalactosaminyl-(1-&gt;4)-alpha-L-iduronyl-(1-&gt;3)-N-acetyl-D-6-sulfogalactosamine + H2O = alpha-L-iduronyl-(1-&gt;3)-N-acetyl-D-6-sulfogalactosamine + N-acetyl-D-6-sulfogalactosamine. Its activity is regulated as follows. Addition of GM2A stimulates the hydrolysis of sulfated glycosphingolipid SM2 and the ganglioside GM2. Hydrolyzes the non-reducing end N-acetyl-D-hexosamine and/or sulfated N-acetyl-D-hexosamine of glycoconjugates, such as the oligosaccharide moieties from proteins and neutral glycolipids, or from certain mucopolysaccharides. The isozyme S is as active as the isozyme A on the anionic bis-sulfated glycans, the chondroitin-6-sulfate trisaccharide (C6S-3), and the dermatan sulfate pentasaccharide, and the sulfated glycosphingolipid SM2. The isozyme B does not hydrolyze each of these substrates, however hydrolyzes efficiently neutral oligosaccharide. Only the isozyme A is responsible for the degradation of GM2 gangliosides in the presence of GM2A. The protein is Beta-hexosaminidase subunit alpha of Pongo abelii (Sumatran orangutan).